A 104-amino-acid polypeptide reads, in one-letter code: uncharacterized protein (104 aa).

This sequence belongs to the mimivirus L28/L54 family.

This is an uncharacterized protein from Acanthamoeba polyphaga mimivirus (APMV).